Reading from the N-terminus, the 666-residue chain is Endogenous retrovirus group K member 21 Gag polyprotein (666 aa).

Gly-2 is lipidated: N-myristoyl glycine. Disordered stretches follow at residues 165 to 189 and 217 to 264; these read GKGP…AGQV and ELQY…GSEL. Residues 232-247 show a composition bias toward pro residues; the sequence is GMPPAPQGRAPYPQPP. 2 CCHC-type zinc fingers span residues 544 to 561 and 580 to 597; these read GKCY…NCPV and DLCP…QCRS. The segment at 598–641 is disordered; that stretch reads KFDKNGQPLSGNEQRGQPQAPQQTGAFPIQPFVPQGFQGQQPPL. Residues 604 to 622 are compositionally biased toward polar residues; the sequence is QPLSGNEQRGQPQAPQQTG. Residues 624-640 are compositionally biased toward low complexity; the sequence is FPIQPFVPQGFQGQQPP.

The protein belongs to the beta type-B retroviral Gag protein family. HERV class-II K(HML-2) gag subfamily. Post-translationally, myristoylation is essential for retroviral assembly. Alteration of the glycine residue leads to a block in the budding of particles and an accumulation of Gag inside the cell. Specific enzymatic cleavages may yield mature proteins.

Its subcellular location is the cell membrane. The products of the Gag polyproteins of infectious retroviruses perform highly complex orchestrated tasks during the assembly, budding, maturation, and infection stages of the viral replication cycle. During viral assembly, the proteins form membrane associations and self-associations that ultimately result in budding of an immature virion from the infected cell. Gag precursors also function during viral assembly to selectively bind and package two plus strands of genomic RNA. Endogenous Gag proteins may have kept, lost or modified their original function during evolution. The chain is Endogenous retrovirus group K member 21 Gag polyprotein (ERVK-21) from Homo sapiens (Human).